The following is a 637-amino-acid chain: Phosphomethylpyrimidine synthase (637 aa).

Substrate is bound by residues Asn242, Met271, Tyr300, His336, Ser356–Gly358, Asp397–Arg400, and Glu436. His440 contacts Zn(2+). Tyr463 lines the substrate pocket. A Zn(2+)-binding site is contributed by His504. Residues Cys584, Cys587, and Cys592 each coordinate [4Fe-4S] cluster.

It belongs to the ThiC family. In terms of assembly, homodimer. [4Fe-4S] cluster is required as a cofactor.

The catalysed reaction is 5-amino-1-(5-phospho-beta-D-ribosyl)imidazole + S-adenosyl-L-methionine = 4-amino-2-methyl-5-(phosphooxymethyl)pyrimidine + CO + 5'-deoxyadenosine + formate + L-methionine + 3 H(+). It participates in cofactor biosynthesis; thiamine diphosphate biosynthesis. Its function is as follows. Catalyzes the synthesis of the hydroxymethylpyrimidine phosphate (HMP-P) moiety of thiamine from aminoimidazole ribotide (AIR) in a radical S-adenosyl-L-methionine (SAM)-dependent reaction. The chain is Phosphomethylpyrimidine synthase from Herminiimonas arsenicoxydans.